A 174-amino-acid chain; its full sequence is Protein MOTHER of FT and TFL1 homolog 2 (174 aa).

The protein belongs to the phosphatidylethanolamine-binding protein family.

In terms of biological role, may form complexes with phosphorylated ligands by interfering with kinases and their effectors. This chain is Protein MOTHER of FT and TFL1 homolog 2, found in Oryza sativa subsp. japonica (Rice).